Reading from the N-terminus, the 246-residue chain is ATP synthase subunit a (246 aa).

The propeptide at 1–3 is removed in mature form; it reads MFY. The next 7 helical transmembrane spans lie at 20–40, 56–76, 82–102, 112–132, 138–158, 176–196, and 203–223; these read ILTL…SIIF, WGVA…SQIG, FFPL…ISMI, LVAI…LGLY, FFAL…LVLI, ANIL…VNLM, and FIGG…EVGI.

The protein belongs to the ATPase A chain family. As to quaternary structure, F-type ATPases have 2 components, CF(1) - the catalytic core - and CF(0) - the membrane proton channel. CF(1) has five subunits: alpha(3), beta(3), gamma(1), delta(1), epsilon(1). CF(0) has three main subunits: a, b and c.

It is found in the mitochondrion inner membrane. Its function is as follows. Mitochondrial membrane ATP synthase (F(1)F(0) ATP synthase or Complex V) produces ATP from ADP in the presence of a proton gradient across the membrane which is generated by electron transport complexes of the respiratory chain. F-type ATPases consist of two structural domains, F(1) - containing the extramembraneous catalytic core and F(0) - containing the membrane proton channel, linked together by a central stalk and a peripheral stalk. During catalysis, ATP synthesis in the catalytic domain of F(1) is coupled via a rotary mechanism of the central stalk subunits to proton translocation. Key component of the proton channel; it may play a direct role in the translocation of protons across the membrane. This chain is ATP synthase subunit a (ATP6), found in Candida albicans (strain SC5314 / ATCC MYA-2876) (Yeast).